The primary structure comprises 188 residues: Elongation factor P (188 aa).

The protein belongs to the elongation factor P family.

It localises to the cytoplasm. Its pathway is protein biosynthesis; polypeptide chain elongation. In terms of biological role, involved in peptide bond synthesis. Stimulates efficient translation and peptide-bond synthesis on native or reconstituted 70S ribosomes in vitro. Probably functions indirectly by altering the affinity of the ribosome for aminoacyl-tRNA, thus increasing their reactivity as acceptors for peptidyl transferase. The chain is Elongation factor P from Ralstonia nicotianae (strain ATCC BAA-1114 / GMI1000) (Ralstonia solanacearum).